We begin with the raw amino-acid sequence, 265 residues long: Apolipoprotein A-I (265 aa).

The N-terminal stretch at methionine 1–alanine 20 is a signal peptide. 2 consecutive repeat copies span residues leucine 69 to arginine 90 and proline 91 to asparagine 112. Residues leucine 69–glutamine 265 form a 10 X approximate tandem repeats region. The stretch at lysine 113–glutamine 123 is one 3; half-length repeat. 5 repeat units span residues proline 124–alanine 145, proline 146–glycine 167, proline 168–alanine 189, proline 190–serine 209, and asparagine 210–lysine 230. Methionine 195 carries the post-translational modification Methionine sulfoxide. Residues proline 231 to methionine 241 form a 9; half-length repeat. Methionine 241 bears the Methionine sulfoxide mark. Copy 10 of the repeat occupies proline 242–glutamine 265.

The protein belongs to the apolipoprotein A1/A4/E family. Homodimer. Interacts with APOA1BP and CLU. Component of a sperm activating protein complex (SPAP), consisting of APOA1, an immunoglobulin heavy chain, an immunoglobulin light chain and albumin. Interacts with NDRG1. Interacts with SCGB3A2. Interacts with NAXE and YJEFN3. In terms of processing, glycosylated. Post-translationally, palmitoylated. Phosphorylation sites are present in the extracellular medium. As to expression, major protein of plasma HDL, also found in chylomicrons.

It is found in the secreted. Functionally, participates in the reverse transport of cholesterol from tissues to the liver for excretion by promoting cholesterol efflux from tissues and by acting as a cofactor for the lecithin cholesterol acyltransferase (LCAT). As part of the SPAP complex, activates spermatozoa motility. The chain is Apolipoprotein A-I (APOA1) from Orycteropus afer (Aardvark).